A 146-amino-acid chain; its full sequence is Large ribosomal subunit protein uL15 (146 aa).

The interval 1 to 46 is disordered; that stretch reads MLHQIKPFKGARKTVKRLGRGCGSGTGKTSGKGHKGQLARSGGGVR. Residues 9–19 show a composition bias toward basic residues; sequence KGARKTVKRLG. The segment covering 20–30 has biased composition (gly residues); that stretch reads RGCGSGTGKTS.

The protein belongs to the universal ribosomal protein uL15 family. As to quaternary structure, part of the 50S ribosomal subunit.

Its function is as follows. Binds to the 23S rRNA. In Phytoplasma mali (strain AT), this protein is Large ribosomal subunit protein uL15.